The primary structure comprises 364 residues: DNA replication and repair protein RecF (364 aa).

30-37 contacts ATP; the sequence is GNNAQGKT.

Belongs to the RecF family.

It is found in the cytoplasm. Its function is as follows. The RecF protein is involved in DNA metabolism; it is required for DNA replication and normal SOS inducibility. RecF binds preferentially to single-stranded, linear DNA. It also seems to bind ATP. This is DNA replication and repair protein RecF from Clostridium botulinum (strain ATCC 19397 / Type A).